The following is a 417-amino-acid chain: MTEYLSVSTLTKYLKAKFDRDRYLERVYLTGEISNFRRRPNHQYFALKDEGAVIQATMWAGQFRKLDFELEEGMKVLAVGRISIYPPSGSYSINIESLVPDGVGALAVKFEQLKKKLTAEGLFEQRWKQTLPQFSKKIAVVTSPSGAVIRDIITTVQRRFPMSQIVLYPTKVQGQGSAEEIAGNIRRANQRGDFDVMIIGRGGGSIEDLWGFNEEIVVRAIFESRIPIISSVGHETDVTLADFVADSRAATPTAAAELATPNTKVDLINWANEQEKRLFNRLTHVIKIRRERVDKLSQSVVFRQPERLYDGHLQKLDRLCERLSVLTENKVANMKHRYELSAGKLIPTYGKIVEAKKNKTEQLYQSLLLLDISKIKARGFSLVTDEKGKIIKSVSDVKKGQTLDVELTDGKVIVEVK.

The protein belongs to the XseA family. Heterooligomer composed of large and small subunits.

It is found in the cytoplasm. It carries out the reaction Exonucleolytic cleavage in either 5'- to 3'- or 3'- to 5'-direction to yield nucleoside 5'-phosphates.. In terms of biological role, bidirectionally degrades single-stranded DNA into large acid-insoluble oligonucleotides, which are then degraded further into small acid-soluble oligonucleotides. The protein is Exodeoxyribonuclease 7 large subunit of Lactococcus lactis subsp. lactis (strain IL1403) (Streptococcus lactis).